The following is a 205-amino-acid chain: DNA-directed RNA polymerase RPB5 homolog (205 aa).

This sequence belongs to the archaeal RpoH/eukaryotic RPB5 RNA polymerase subunit family. Part of the viral DNA-directed RNA polymerase that consists of 8 polII-like subunits (RPB1, RPB2, RPB3, RPB5, RPB6, RPB7, RPB9, RPB10), a capping enzyme and a termination factor.

The protein localises to the host cytoplasm. It localises to the virion. Component of the DNA-directed RNA polymerase (RNAP) that catalyzes the transcription in the cytoplasm of viral DNA into RNA using the four ribonucleoside triphosphates as substrates. The protein is DNA-directed RNA polymerase RPB5 homolog of African swine fever virus (isolate Pig/Kenya/KEN-50/1950) (ASFV).